Reading from the N-terminus, the 116-residue chain is Large ribosomal subunit protein bL17 (116 aa).

This sequence belongs to the bacterial ribosomal protein bL17 family. In terms of assembly, part of the 50S ribosomal subunit. Contacts protein L32.

The polypeptide is Large ribosomal subunit protein bL17 (Sulfurimonas denitrificans (strain ATCC 33889 / DSM 1251) (Thiomicrospira denitrificans (strain ATCC 33889 / DSM 1251))).